A 336-amino-acid polypeptide reads, in one-letter code: Aspartate carbamoyltransferase catalytic subunit (336 aa).

Carbamoyl phosphate contacts are provided by arginine 72 and threonine 73. Lysine 100 contacts L-aspartate. 3 residues coordinate carbamoyl phosphate: arginine 122, histidine 152, and glutamine 155. Residues arginine 185 and arginine 240 each contribute to the L-aspartate site. 2 residues coordinate carbamoyl phosphate: glycine 281 and proline 282.

The protein belongs to the aspartate/ornithine carbamoyltransferase superfamily. ATCase family. In terms of assembly, heterododecamer (2C3:3R2) of six catalytic PyrB chains organized as two trimers (C3), and six regulatory PyrI chains organized as three dimers (R2).

It catalyses the reaction carbamoyl phosphate + L-aspartate = N-carbamoyl-L-aspartate + phosphate + H(+). It participates in pyrimidine metabolism; UMP biosynthesis via de novo pathway; (S)-dihydroorotate from bicarbonate: step 2/3. Its function is as follows. Catalyzes the condensation of carbamoyl phosphate and aspartate to form carbamoyl aspartate and inorganic phosphate, the committed step in the de novo pyrimidine nucleotide biosynthesis pathway. This is Aspartate carbamoyltransferase catalytic subunit from Marinobacter nauticus (strain ATCC 700491 / DSM 11845 / VT8) (Marinobacter aquaeolei).